A 389-amino-acid chain; its full sequence is Aspartate aminotransferase (389 aa).

Residues glycine 34 and asparagine 171 each contribute to the L-aspartate site. Position 233 is an N6-(pyridoxal phosphate)lysine (lysine 233). Arginine 362 is a binding site for L-aspartate.

This sequence belongs to the class-I pyridoxal-phosphate-dependent aminotransferase family. As to quaternary structure, homodimer. Requires pyridoxal 5'-phosphate as cofactor.

It is found in the cytoplasm. The catalysed reaction is L-aspartate + 2-oxoglutarate = oxaloacetate + L-glutamate. The sequence is that of Aspartate aminotransferase (aspC) from Pyrococcus abyssi (strain GE5 / Orsay).